The following is a 399-amino-acid chain: MSQRQSQSPNQTLISITNDTETSSSVVSNDTTHKGWTGDNSPGIEALCAIYITYAGIISVGILGNAILIKVFFKTKSMQTVPNIFITSLAFGDLLLLLTCVPVDATHYLAEGWLFGKVGCKVLSFIRLTSVGVSVFTLTILSADRYKAVVKPLERQPPNAILKTCAKAGGIWIVSMIFALPEAIFSNVYTFQDPNRNVTFESCNSYPISERLLQEIHSLLCFLVFYIIPLSIISVYYSLIARTLYKSTLNIPTEEQSHARKQIESRKRIAKTVLVLVALFALCWLPNHLLYLYHSFTYESYANHSDVPFVIIIFSRVLAFSNSCVNPFALYWLSKTFQQHFKAQLCCLKAEQPEPPLGDIPLNNLTVMGRVPATGSAHVSEISVTLFSGSSAKKGEDKV.

Over 1–41 the chain is Extracellular; that stretch reads MSQRQSQSPNQTLISITNDTETSSSVVSNDTTHKGWTGDNS. 3 N-linked (GlcNAc...) asparagine glycosylation sites follow: Asn-10, Asn-18, and Asn-29. A helical transmembrane segment spans residues 42–63; the sequence is PGIEALCAIYITYAGIISVGIL. The Cytoplasmic portion of the chain corresponds to 64–82; it reads GNAILIKVFFKTKSMQTVP. Residues 83 to 103 traverse the membrane as a helical segment; it reads NIFITSLAFGDLLLLLTCVPV. At 104-121 the chain is on the extracellular side; sequence DATHYLAEGWLFGKVGCK. A disulfide bond links Cys-120 and Cys-203. Residues 122–143 form a helical membrane-spanning segment; that stretch reads VLSFIRLTSVGVSVFTLTILSA. Residues 144-163 are Cytoplasmic-facing; sequence DRYKAVVKPLERQPPNAILK. The chain crosses the membrane as a helical span at residues 164–184; that stretch reads TCAKAGGIWIVSMIFALPEAI. At 185-220 the chain is on the extracellular side; it reads FSNVYTFQDPNRNVTFESCNSYPISERLLQEIHSLL. A helical membrane pass occupies residues 221 to 241; that stretch reads CFLVFYIIPLSIISVYYSLIA. Residues 242-272 lie on the Cytoplasmic side of the membrane; sequence RTLYKSTLNIPTEEQSHARKQIESRKRIAKT. Residues 273 to 293 form a helical membrane-spanning segment; it reads VLVLVALFALCWLPNHLLYLY. Topologically, residues 294–313 are extracellular; it reads HSFTYESYANHSDVPFVIII. A helical membrane pass occupies residues 314–333; the sequence is FSRVLAFSNSCVNPFALYWL. Residues 334-399 are Cytoplasmic-facing; it reads SKTFQQHFKA…SSAKKGEDKV (66 aa). Cys-347 carries S-palmitoyl cysteine lipidation.

It belongs to the G-protein coupled receptor 1 family. As to quaternary structure, interacts with C6orf89.

The protein resides in the cell membrane. Role in sperm cell division, maturation, or function. This receptor mediates its action by association with G proteins that activate a phosphatidylinositol-calcium second messenger system. In Mus musculus (Mouse), this protein is Bombesin receptor subtype-3 (Brs3).